Consider the following 268-residue polypeptide: UPF0328 protein ECU10_1850 (268 aa).

The protein belongs to the UPF0328 family.

This is UPF0328 protein ECU10_1850 from Encephalitozoon cuniculi (strain GB-M1) (Microsporidian parasite).